Reading from the N-terminus, the 89-residue chain is Dynein light chain (89 aa).

Belongs to the dynein light chain family. Tegument.

It localises to the cytoplasm. Its subcellular location is the cytoskeleton. Acts as a non-catalytic accessory component of a dynein complex. The polypeptide is Dynein light chain (DLC) (Schistosoma mansoni (Blood fluke)).